The primary structure comprises 32 residues: Beta-amanitin proprotein (32 aa).

A propeptide spanning residues 1 to 10 is cleaved from the precursor; the sequence is MSDINATRLP. The cyclopeptide (Ile-Pro) cross-link spans 11 to 18; sequence IWGIGCDP. Residues 12–16 constitute a cross-link (2'-cysteinyl-6'-hydroxytryptophan sulfoxide (Trp-Cys)); it reads WGIGC. Positions 19-32 are excised as a propeptide; it reads CIGDDVTILLTRGE.

Belongs to the MSDIN fungal toxin family. In terms of processing, processed by the macrocyclase-peptidase enzyme POPB to yield a toxic cyclic decapeptide. POPB first removes 10 residues from the N-terminus. Conformational trapping of the remaining peptide forces the enzyme to release this intermediate rather than proceed to macrocyclization. The enzyme rebinds the remaining peptide in a different conformation and catalyzes macrocyclization of the N-terminal 8 residues.

Its function is as follows. Toxin belonging to the bicyclic octapeptides amatoxins that acts by binding non-competitively to RNA polymerase II and greatly slowing the elongation of transcripts from target promoters. This is Beta-amanitin proprotein from Amanita phalloides (Death cap).